The sequence spans 460 residues: Solute carrier family 52, riboflavin transporter, member 3 (460 aa).

The Cytoplasmic segment spans residues 1–6; it reads MAFLTH. A helical transmembrane segment spans residues 7–27; the sequence is LLVCVFGMGSWVAINGLWVEL. The Extracellular portion of the chain corresponds to 28–37; the sequence is PLLVTELPEA. Residues 38 to 58 traverse the membrane as a helical segment; the sequence is WYLPSYLTVVIQLANIGPLLV. The Cytoplasmic portion of the chain corresponds to 59–71; it reads TLMHRFRPGCLSE. A helical membrane pass occupies residues 72–92; it reads VPVIFLILCVGTAACILLAFL. Over 93–105 the chain is Extracellular; that stretch reads WNVTSWIQGGQHS. Asparagine 94 is a glycosylation site (N-linked (GlcNAc...) asparagine). Residues 106–126 form a helical membrane-spanning segment; that stretch reads VAFIVLTFFLALVDCTSSVTF. Residues 127-137 are Cytoplasmic-facing; sequence LPFMSQLPTYY. A helical membrane pass occupies residues 138–158; it reads LTTFFIGEGLSGLLPALVALV. At 159–211 the chain is on the extracellular side; the sequence is QGSGITTCVNVTETPGTTLNTMETPITQGNLSPSLPSPSWHQESRYLAPRFSP. Asparagine 168 is a glycosylation site (N-linked (GlcNAc...) asparagine). Residues 212 to 232 traverse the membrane as a helical segment; it reads LLFFLLLSFLTGCCLVAFFLL. The Cytoplasmic segment spans residues 233–291; sequence QRQPWGRQGSIEDLLHSQVTLHSIRPRDTEDTSSLGAPVSSPGKGSVEASVASLRPAQL. Phosphoserine occurs at positions 242 and 266. Residues 292 to 312 form a helical membrane-spanning segment; the sequence is AFIYSVVAFVNALTNGVLPSV. Topologically, residues 313–326 are extracellular; it reads QTYSCLPYGPVAYH. A helical membrane pass occupies residues 327 to 347; sequence LSATLSSVASPLACFLPIFLP. Over 348 to 350 the chain is Cytoplasmic; it reads NRS. The chain crosses the membrane as a helical span at residues 351–371; the sequence is LLFLGVLTVLGTGFGAYNMAM. The Extracellular portion of the chain corresponds to 372 to 387; sequence AAMSPCPVLQGHWGGE. An intrachain disulfide couples cysteine 377 to cysteine 454. Residues 388-408 traverse the membrane as a helical segment; that stretch reads VLIVLSWVLFAACLSYVKVML. The Cytoplasmic portion of the chain corresponds to 409-418; sequence GVILRDRSRS. The chain crosses the membrane as a helical span at residues 419 to 439; that stretch reads ALLWCGAAVQLGSLIGALLMF. The Extracellular segment spans residues 440–460; sequence PLVNVLKLFSSADYCSLDCSV.

This sequence belongs to the riboflavin transporter family. As to expression, within the small intestine, it is particularly expressed in the jujenum and the ileum. Almost negligible expression in the stomach, duodenum, and large intestine.

The protein resides in the cell membrane. It catalyses the reaction riboflavin(in) = riboflavin(out). Functionally, plasma membrane transporter mediating the uptake by cells of the water soluble vitamin B2/riboflavin that plays a key role in biochemical oxidation-reduction reactions of the carbohydrate, lipid, and amino acid metabolism. This is Solute carrier family 52, riboflavin transporter, member 3 (Slc52a3) from Mus musculus (Mouse).